The chain runs to 591 residues: Aspartate--tRNA ligase (591 aa).

Residue Glu173 participates in L-aspartate binding. The aspartate stretch occupies residues 197 to 200; sequence QLFK. Residue Arg219 participates in L-aspartate binding. Residues 219-221 and Gln228 contribute to the ATP site; that span reads RDE. His448 provides a ligand contact to L-aspartate. Glu482 lines the ATP pocket. L-aspartate is bound at residue Arg489. Residue 534–537 coordinates ATP; it reads GLDR.

The protein belongs to the class-II aminoacyl-tRNA synthetase family. Type 1 subfamily. In terms of assembly, homodimer.

The protein localises to the cytoplasm. It carries out the reaction tRNA(Asp) + L-aspartate + ATP = L-aspartyl-tRNA(Asp) + AMP + diphosphate. Catalyzes the attachment of L-aspartate to tRNA(Asp) in a two-step reaction: L-aspartate is first activated by ATP to form Asp-AMP and then transferred to the acceptor end of tRNA(Asp). This Shewanella frigidimarina (strain NCIMB 400) protein is Aspartate--tRNA ligase.